Reading from the N-terminus, the 542-residue chain is Protein NODULATION SIGNALING PATHWAY 1 (542 aa).

The interval 73 to 150 is disordered; it reads TSTTSLEPCG…SNCNSGNSKE (78 aa). The segment covering 92–103 has biased composition (basic and acidic residues); sequence LPKKRNATDESS. The span at 136–148 shows a compositional bias: low complexity; that stretch reads AKANGSNCNSGNS. The 388-residue stretch at 145-532 folds into the GRAS domain; that stretch reads SGNSKEGRWA…QPVSFCSLWK (388 aa). Positions 152-214 are leucine repeat I (LRI); sequence RWAEQLLNPC…HLSSSSSSPT (63 aa). Residues 233–332 are VHIID; it reads LLKFYEVSPW…GYNYYPRLLG (100 aa). A VHIID motif is present at residues 269–273; sequence LHILD. The interval 333 to 357 is leucine repeat II (LRII); sequence YAQSININLQINRIENHSLQTLNAQ. Residues 367–452 are PFYRE; sequence LIVCAQFRLH…RESDERRVME (86 aa). Positions 455-532 are SAW; it reads AAKALTNQRE…QPVSFCSLWK (78 aa).

The protein belongs to the GRAS family. As to expression, highly expressed in roots.

It is found in the nucleus. Functionally, transcriptional regulator essential for Nod-factor-induced gene expression. Acts downstream of calcium spiking and a calcium/calmodulin-dependent protein kinase required for activation of early nodulation gene expression. Acts as a common symbiosis gene that positively contributes to the early steps of the arbuscular mycorrhizal fungus and rhizobial infection processes in roots. Transcription factor involved in the positive regulation of the beta-carotene isomerase D27, which participates in a pathway leading to biosynthesis of strigolactones in roots. This is Protein NODULATION SIGNALING PATHWAY 1 from Lotus japonicus (Lotus corniculatus var. japonicus).